Reading from the N-terminus, the 138-residue chain is von Willebrand factor C domain-containing protein 2-like (138 aa).

The N-terminal stretch at Met1–Ser21 is a signal peptide. The VWFC domain occupies Lys51–Lys110.

Peripherally associated with AMPAR complex. AMPAR complex consists of an inner core made of 4 pore-forming GluA/GRIA proteins (GRIA1, GRIA2, GRIA3 and GRIA4) and 4 major auxiliary subunits arranged in a twofold symmetry. One of the two pairs of distinct binding sites is occupied either by CNIH2, CNIH3 or CACNG2, CACNG3. The other harbors CACNG2, CACNG3, CACNG4, CACNG8 or GSG1L. This inner core of AMPAR complex is complemented by outer core constituents binding directly to the GluA/GRIA proteins at sites distinct from the interaction sites of the inner core constituents. Outer core constituents include at least PRRT1, PRRT2, CKAMP44/SHISA9, FRRS1L and NRN1. The proteins of the inner and outer core serve as a platform for other, more peripherally associated AMPAR constituents, including VWC2L. Alone or in combination, these auxiliary subunits control the gating and pharmacology of the AMPAR complex and profoundly impact their biogenesis and protein processing.

It is found in the secreted. The protein localises to the synapse. May play a role in neurogenesis. May play a role in bone differentiation and matrix mineralization. The chain is von Willebrand factor C domain-containing protein 2-like (VWC2L) from Macaca fascicularis (Crab-eating macaque).